The sequence spans 222 residues: uncharacterized protein (222 aa).

Belongs to the ycf73 family.

The protein localises to the plastid. It localises to the chloroplast. This is an uncharacterized protein from Oryza nivara (Indian wild rice).